Here is a 226-residue protein sequence, read N- to C-terminus: ATP-dependent dethiobiotin synthetase BioD (226 aa).

14 to 19 provides a ligand contact to ATP; that stretch reads GIGKTF. Residue T18 participates in Mg(2+) binding. K39 is an active-site residue. S43 contributes to the substrate binding site. ATP contacts are provided by residues D56, 117 to 120, 177 to 178, 206 to 208, and N213; these read EGVG, NT, and PHI. Mg(2+)-binding residues include D56 and E117.

This sequence belongs to the dethiobiotin synthetase family. In terms of assembly, homodimer. Mg(2+) is required as a cofactor.

It is found in the cytoplasm. The enzyme catalyses (7R,8S)-7,8-diammoniononanoate + CO2 + ATP = (4R,5S)-dethiobiotin + ADP + phosphate + 3 H(+). Its pathway is cofactor biosynthesis; biotin biosynthesis; biotin from 7,8-diaminononanoate: step 1/2. Catalyzes a mechanistically unusual reaction, the ATP-dependent insertion of CO2 between the N7 and N8 nitrogen atoms of 7,8-diaminopelargonic acid (DAPA, also called 7,8-diammoniononanoate) to form a ureido ring. The protein is ATP-dependent dethiobiotin synthetase BioD of Xylella fastidiosa (strain M12).